The sequence spans 834 residues: Periplasmic nitrate reductase (834 aa).

The segment at residues 1–29 is a signal peptide (tat-type signal); the sequence is MKLSRREFAKANAAAIAAAAAGLPLASTA. The 4Fe-4S Mo/W bis-MGD-type domain maps to 41–97; it reads LDWNKAPCRFCGTGCSVMVATRDNRVVATHGDVKAEVNRGLNCVKGYFLSKIMYGVD. Residues C48, C51, C55, and C83 each coordinate [4Fe-4S] cluster. Mo-bis(molybdopterin guanine dinucleotide)-binding positions include K85, Q152, N177, C181, 214 to 221, 245 to 249, 264 to 266, M375, Q379, N485, 511 to 512, K534, D561, and 721 to 730; these read WGSNMAEM, STFEH, QTD, SD, and TGRVLEHWHT. F797 provides a ligand contact to substrate. Residues N805 and K822 each contribute to the Mo-bis(molybdopterin guanine dinucleotide) site.

Belongs to the prokaryotic molybdopterin-containing oxidoreductase family. NasA/NapA/NarB subfamily. In terms of assembly, component of the periplasmic nitrate reductase NapAB complex composed of NapA and NapB. Requires [4Fe-4S] cluster as cofactor. The cofactor is Mo-bis(molybdopterin guanine dinucleotide). In terms of processing, predicted to be exported by the Tat system. The position of the signal peptide cleavage has not been experimentally proven.

Its subcellular location is the periplasm. The catalysed reaction is 2 Fe(II)-[cytochrome] + nitrate + 2 H(+) = 2 Fe(III)-[cytochrome] + nitrite + H2O. Catalytic subunit of the periplasmic nitrate reductase complex NapAB. Receives electrons from NapB and catalyzes the reduction of nitrate to nitrite. This chain is Periplasmic nitrate reductase, found in Ectopseudomonas mendocina (strain ymp) (Pseudomonas mendocina).